Reading from the N-terminus, the 561-residue chain is uncharacterized protein (561 aa).

2 helical membrane passes run 29–49 (FIFN…KKII) and 80–100 (FLFH…AVVI).

Its subcellular location is the cell membrane. This is an uncharacterized protein from Mycoplasma pneumoniae (strain ATCC 29342 / M129 / Subtype 1) (Mycoplasmoides pneumoniae).